The following is a 430-amino-acid chain: Tryptophan synthase beta chain (430 aa).

K95 is subject to N6-(pyridoxal phosphate)lysine.

Belongs to the TrpB family. In terms of assembly, tetramer of two alpha and two beta chains. Requires pyridoxal 5'-phosphate as cofactor.

It carries out the reaction (1S,2R)-1-C-(indol-3-yl)glycerol 3-phosphate + L-serine = D-glyceraldehyde 3-phosphate + L-tryptophan + H2O. It functions in the pathway amino-acid biosynthesis; L-tryptophan biosynthesis; L-tryptophan from chorismate: step 5/5. Functionally, the beta subunit is responsible for the synthesis of L-tryptophan from indole and L-serine. This is Tryptophan synthase beta chain from Halobacterium salinarum (strain ATCC 29341 / DSM 671 / R1).